The primary structure comprises 284 residues: 2-dehydro-3-deoxyphosphooctonate aldolase (284 aa).

It belongs to the KdsA family.

It localises to the cytoplasm. It catalyses the reaction D-arabinose 5-phosphate + phosphoenolpyruvate + H2O = 3-deoxy-alpha-D-manno-2-octulosonate-8-phosphate + phosphate. It functions in the pathway carbohydrate biosynthesis; 3-deoxy-D-manno-octulosonate biosynthesis; 3-deoxy-D-manno-octulosonate from D-ribulose 5-phosphate: step 2/3. Its pathway is bacterial outer membrane biogenesis; lipopolysaccharide biosynthesis. The chain is 2-dehydro-3-deoxyphosphooctonate aldolase from Shigella boydii serotype 18 (strain CDC 3083-94 / BS512).